Here is a 358-residue protein sequence, read N- to C-terminus: Putative spore germination protein YfkT (358 aa).

Transmembrane regions (helical) follow at residues 10–30 (LFFG…ILMI), 36–56 (NAWH…WLMH), 81–101 (IIIL…IRFF), 107–127 (ILFL…FVAI), 143–163 (IFLF…ATQI), 179–199 (LQSG…PLLF), 210–230 (IFAI…SISV), 262–282 (IIAA…LYIV), 297–317 (AMYT…FLNT), and 326–346 (IKPI…YLII).

Belongs to the amino acid-polyamine-organocation (APC) superfamily. Spore germination protein (SGP) (TC 2.A.3.9) family.

The protein localises to the cell membrane. May be involved in spore germination. The protein is Putative spore germination protein YfkT (yfkT) of Bacillus subtilis (strain 168).